The primary structure comprises 109 residues: Cortistatin (109 aa).

Positions 1–25 (MMGGRGTGGKWPSAFGLLLLWGVAA) are cleaved as a signal peptide. Positions 26–93 (SALPLESGPT…PPPQQPPHLD (68 aa)) are excised as a propeptide. Residues 64–97 (ASSSTPVGGGTPGLSKSQERPPPQQPPHLDKKPC) form a disordered region. C97 and C108 form a disulfide bridge.

It belongs to the somatostatin family. As to expression, expressed in a subset of GABAergic cells in the cortex and hippocampus.

The protein resides in the secreted. The chain is Cortistatin (Cort) from Mus musculus (Mouse).